The sequence spans 714 residues: Fatty acid oxidation complex subunit alpha (714 aa).

The segment at 1 to 190 (MEMASAFTLN…KLGLVDDVVP (190 aa)) is enoyl-CoA hydratase. Residues 306-714 (APLNSVGILG…FWKTTATDLQ (409 aa)) are 3-hydroxyacyl-CoA dehydrogenase.

In the N-terminal section; belongs to the enoyl-CoA hydratase/isomerase family. It in the central section; belongs to the 3-hydroxyacyl-CoA dehydrogenase family. In terms of assembly, heterotetramer of two alpha chains (FadJ) and two beta chains (FadI).

It is found in the cytoplasm. It catalyses the reaction a (3S)-3-hydroxyacyl-CoA = a (2E)-enoyl-CoA + H2O. The catalysed reaction is a 4-saturated-(3S)-3-hydroxyacyl-CoA = a (3E)-enoyl-CoA + H2O. It carries out the reaction a (3S)-3-hydroxyacyl-CoA + NAD(+) = a 3-oxoacyl-CoA + NADH + H(+). The enzyme catalyses (3S)-3-hydroxybutanoyl-CoA = (3R)-3-hydroxybutanoyl-CoA. It participates in lipid metabolism; fatty acid beta-oxidation. In terms of biological role, catalyzes the formation of a hydroxyacyl-CoA by addition of water on enoyl-CoA. Also exhibits 3-hydroxyacyl-CoA epimerase and 3-hydroxyacyl-CoA dehydrogenase activities. The chain is Fatty acid oxidation complex subunit alpha from Shigella boydii serotype 4 (strain Sb227).